Reading from the N-terminus, the 296-residue chain is CTD kinase subunit gamma (296 aa).

Positions 25–44 are disordered; that stretch reads RDSITSSSTTTPPSSQQKLN. A compositionally biased stretch (low complexity) spans 29-39; it reads TSSSTTTPPSS. A Phosphothreonine modification is found at Thr35.

The protein belongs to the CTK3 family. In terms of assembly, CTDK-I consists of three subunits, CTK1, CTK2 and CTK3 (also called alpha, beta and gamma). Interacts with CTK1. Heterodimerization with CTK2 is required to protect this subunit from degradation. Ubiquitinated. Ubiquitination leads to degradation by the 26S proteasome pathway.

It is found in the nucleus. The protein localises to the nucleolus. The protein resides in the cytoplasm. In terms of biological role, gamma subunit of the CTDK-I complex, which hyperphosphorylates the C-terminal heptapeptide repeat domain (CTD) of the largest RNA polymerase II subunit. CTDK-I phosphorylates 'Ser-5' if the CTD substrate is not phosphorylated at 'Ser-5', but will phosphorylate 'Ser-2' of a CTD substrate if 'Ser-5' is already phosphorylated. CTDK-I is also more reactive toward substrates that are prephosphorylated at 'Ser-2' or 'Ser-5' compared with an unphosphorylated CTD substrate, therefore efficiently creating doubly phosphorylated CTD repeats. Involved in RNA polymerase I transcription and RNA polymerase II transcriptional elongation, and as part of the CTDK-I complex, pre-mRNA 3'-end processing and SET2 mediated H3K36 methylation. Together with CTK2, required for CTK1 CTD kinase activation. Required for DNA damage induced transcription. Involved in the adaptation to alternative carbon sources, including galactose, glycerol and ethanol, but not raffinose. Required for the integrity of the rDNA locus. The chain is CTD kinase subunit gamma (CTK3) from Saccharomyces cerevisiae (strain ATCC 204508 / S288c) (Baker's yeast).